The primary structure comprises 181 residues: MMILVTGGARSGKSRHAEALIGDSSQVLYIATSQILDDEMAARIEHHRQGRPEHWRTVERWQHLDELIHADINPNEVVLLECVTTMVTNLLFDYGGDKDPDEWDYQAMEQAINAEIQSLIAACQRCPAKVVLVTNEVGMGIVPESRLARHFRDIAGRVNQQLAAAANEVWLVVSGIGVKIK.

GTP is bound by residues glycine 7 to serine 14 and alanine 31 to serine 33. The active-site GMP-histidine intermediate is histidine 47. Residues arginine 48–arginine 51, glutamate 59, and glutamate 81 each bind GTP.

It belongs to the CobU/CobP family. Homodimer.

The catalysed reaction is adenosylcob(III)inamide + GTP = adenosylcob(III)inamide phosphate + GDP + H(+). It catalyses the reaction adenosylcob(III)inamide + ATP = adenosylcob(III)inamide phosphate + ADP + H(+). The enzyme catalyses adenosylcob(III)inamide phosphate + GTP + H(+) = adenosylcob(III)inamide-GDP + diphosphate. The protein operates within cofactor biosynthesis; adenosylcobalamin biosynthesis; adenosylcobalamin from cob(II)yrinate a,c-diamide: step 5/7. Its pathway is cofactor biosynthesis; adenosylcobalamin biosynthesis; adenosylcobalamin from cob(II)yrinate a,c-diamide: step 6/7. Functionally, catalyzes ATP-dependent phosphorylation of adenosylcobinamide and addition of GMP to adenosylcobinamide phosphate. The polypeptide is Bifunctional adenosylcobalamin biosynthesis protein CobU (cobU) (Escherichia coli (strain K12)).